The primary structure comprises 394 residues: 3-ketosteroid-9-alpha-monooxygenase, oxygenase component (394 aa).

Residues 27–129 form the Rieske domain; sequence WHCLGLAKDF…TLDQDGLLFV (103 aa). Residues Cys68, His70, Cys87, and His90 each coordinate [2Fe-2S] cluster. Positions 175, 181, and 186 each coordinate Fe cation. Tyr245 is a binding site for substrate. Asp305 contributes to the Fe cation binding site.

As to quaternary structure, homotrimer. The two-component system 3-ketosteroid-9-alpha-monooxygenase is composed of an oxygenase component KshA and a reductase component KshB. The cofactor is [2Fe-2S] cluster. Fe cation serves as cofactor.

It carries out the reaction androsta-1,4-diene-3,17-dione + 2 reduced [2Fe-2S]-[ferredoxin] + O2 + 2 H(+) = 9alpha-hydroxyandrosta-1,4-diene-3,17-dione + 2 oxidized [2Fe-2S]-[ferredoxin] + H2O. In terms of biological role, may be involved in the degradation of cholic acid, a steroid acid found predominantly in the bile. In vitro, catalyzes the introduction of a 9alpha-hydroxyl moiety into the ring B of 3-ketosteroid substrates such as 1,4-androstadiene-3,17-dione (ADD), 4-androstene-3,17-dione (AD), 4-androstene-17beta-ol-3-one (testosterone), 4-pregnene-3,20-dione (progesterone), 3-oxo-23,24-bisnorcholesta-4-en-22-oate (4-BNC), 23,24-bisnorcholesta-4-ene-22-oate, 3-oxo-23,24-bisnorcholaesta-1,4-dien-22-oate (1,4-BNC), 23,24-bisnorcholesta-1,4-diene-22-oate and 3-oxo-23,24-bisnorcholesta-1,4-dien-22-oyl-coenzyme A thioester (1,4-BNC-CoA). KshA1 has the highest specificity for steroids possessing an isopropionyl side chain at C17. The chain is 3-ketosteroid-9-alpha-monooxygenase, oxygenase component from Rhodococcus rhodochrous.